Here is a 138-residue protein sequence, read N- to C-terminus: Protein FAM136A (138 aa).

Residue A2 is modified to N-acetylalanine. 2 positions are modified to phosphothreonine: T124 and T126.

It belongs to the FAM136 family.

The protein is Protein FAM136A (FAM136A) of Homo sapiens (Human).